A 294-amino-acid chain; its full sequence is tRNA pseudouridine synthase B (294 aa).

The Nucleophile role is filled by Asp-39.

The protein belongs to the pseudouridine synthase TruB family. Type 1 subfamily.

The enzyme catalyses uridine(55) in tRNA = pseudouridine(55) in tRNA. Its function is as follows. Responsible for synthesis of pseudouridine from uracil-55 in the psi GC loop of transfer RNAs. The chain is tRNA pseudouridine synthase B from Streptococcus pyogenes serotype M3 (strain ATCC BAA-595 / MGAS315).